The following is a 637-amino-acid chain: MAETAEPEGGAPSPQGPPEGSALLEERPGEPDPAGPEASEGAAKAPSGEGAGAAAKAGATEEASGGRDGEGAGEQAPDAGTESGGETPDAKGAQIEAEGAPEGTKAPQLGEEGSGGKQVEESGPDCELRGEAAREAEGQAAAPAAPGAQEEAVPGDSVDAEGSIDAGGSVDAAGSVDAGGSIDAGGSMDAGGSVDAGGSIDTGGSVDAAGSVDAGGSIDTGRNVDAGGSIDAGGSVDAGGSMDAEGPAGGAHGAGGEPQDLGAGSPQPRSEAVEVAAAENEGHSPGESVEDAAAEEAAGTREPEGSEDAAGEDGDQGRPQEETEQQAERQEPGPETQSEEEERPPDRSPDGEAAASTRAAQPEAELSNHLAAEEGGQRGEGPANGRGEDGEASEEGDPGQEHDITLFVKAGYDGESIGNCPFSQRLFMILWLKGVIFNVTTVDLKRKPADLQNLAPGTNPPFMTFDGDVKTDVNKIEEFLEEKLAPPRYPKLATQHPESNSAGNDVFAKFSAFIKNTKKDANEIYEKSLLKALKKLDAYLNSPLPDEVDAYSTEDVAVSGRKFLDGDDLTLADCNLLPKLHIIKIVAKKYRDFEFPPEMTGIWRYLNNAYARDEFINTCPADQEIEHAYSDVAKRMK.

Positions 1-400 (MAETAEPEGG…EASEEGDPGQ (400 aa)) are disordered. Residues 35-63 (GPEASEGAAKAPSGEGAGAAAKAGATEEA) are compositionally biased toward low complexity. Phosphoserine is present on S39. The segment covering 126–137 (CELRGEAAREAE) has biased composition (basic and acidic residues). The span at 138–152 (GQAAAPAAPGAQEEA) shows a compositional bias: low complexity. A run of 15 repeats spans residues 155–160 (GDSVDA), 161–166 (EGSIDA), 167–172 (GGSVDA), 173–178 (AGSVDA), 179–184 (GGSIDA), 185–190 (GGSMDA), 191–196 (GGSVDA), 197–202 (GGSIDT), 203–208 (GGSVDA), 209–214 (AGSVDA), 215–220 (GGSIDT), 221–226 (GRNVDA), 227–232 (GGSIDA), 233–238 (GGSVDA), and 239–244 (GGSMDA). A 15 X 6 AA tandem repeat of [GEA]-[DGR]-[SN]-[VIM]-D-[AT] region spans residues 155–244 (GDSVDAEGSI…SVDAGGSMDA (90 aa)). The segment covering 247–256 (PAGGAHGAGG) has biased composition (gly residues). Residues 305–314 (GSEDAAGEDG) show a composition bias toward acidic residues. The segment covering 315–332 (DQGRPQEETEQQAERQEP) has biased composition (basic and acidic residues). Phosphoserine occurs at positions 348 and 393. A G-site motif is present at residues 420–423 (CPFS). The helical transmembrane segment at 422–442 (FSQRLFMILWLKGVIFNVTTV) threads the bilayer. The GST C-terminal domain maps to 466-637 (DGDVKTDVNK…AYSDVAKRMK (172 aa)).

The protein belongs to the chloride channel CLIC family. Monomer (soluble state). Interacts with dopamine receptors DRD2, DRD3 and DRD4. In terms of processing, phosphorylated. Expressed in brain, chorioretinal, lacrimal glands, submandibular glands, airway epithelium, kidney and gastric mucosa, where it is preferentially expressed in cells that secrete or transport water. In brain, it is highly expressed in choroid plexus. Not detected in pancreas, adrenal glands, heart, skeletal muscle, ileal mucosa, liver and lung.

It is found in the cytoplasm. It localises to the cell membrane. It carries out the reaction chloride(in) = chloride(out). With respect to regulation, channel activity is redox- and pH-regulated. Inhibited by IAA-94. Functionally, in the soluble state, catalyzes glutaredoxin-like thiol disulfide exchange reactions with reduced glutathione as electron donor. Can insert into membranes and form voltage-dependent chloride-selective channels. The channel opens upon membrane depolarization at positive voltages and closes at negative membrane voltages. May play a critical role in water-secreting cells, possibly through the regulation of chloride ion transport. This chain is Chloride intracellular channel protein 6 (CLIC6), found in Oryctolagus cuniculus (Rabbit).